Reading from the N-terminus, the 386-residue chain is 5-hydroxytryptamine receptor 1B (386 aa).

The Extracellular portion of the chain corresponds to 1-42 (MEEQGIQCAPPPPAASQTGVPLTNLSHNCSADGYIYQDSIAL). N-linked (GlcNAc...) asparagine glycosylation is found at Asn-24 and Asn-28. A helical membrane pass occupies residues 43 to 68 (PWKVLLVALLALITLATTLSNAFVIA). The Cytoplasmic segment spans residues 69–82 (TVYRTRKLHTPANY). A helical transmembrane segment spans residues 83-107 (LIASLAVTDLLVSILVMPISTMYTV). At 108–115 (TGRWTLGQ) the chain is on the extracellular side. The chain crosses the membrane as a helical span at residues 116–141 (VVCDFWLSSDITCCTASIMHLCVIAL). A disulfide bond links Cys-118 and Cys-195. Asp-125 and Thr-130 together coordinate ergotamine. The DRY motif; important for ligand-induced conformation changes and signaling motif lies at 142–144 (DRY). The Cytoplasmic segment spans residues 142–161 (DRYWAITDAVEYSAKRTPKR). A helical membrane pass occupies residues 162 to 180 (AAIMIVLVWVFSISISLPP). At 181–201 (FFWRQAKAEEEMLDCFVNTDH) the chain is on the extracellular side. An ergotamine-binding site is contributed by Val-197. Residues 202-225 (VLYTVYSTVGAFYLPTLLLIALYG) form a helical membrane-spanning segment. Over 226-311 (RIYVEARSRI…AARERKATKT (86 aa)) the chain is Cytoplasmic. A compositionally biased stretch (polar residues) spans 255-268 (DSPGSTSSVTSINS). Positions 255 to 278 (DSPGSTSSVTSINSRAPDVPSESG) are disordered. A helical transmembrane segment spans residues 312 to 333 (LGIILGAFIVCWLPFFIISLVM). The Extracellular segment spans residues 334-343 (PICKDACWFH). The helical transmembrane segment at 344-366 (MAIFDFFNWLGYLNSLINPIIYT) threads the bilayer. The NPxxY motif; important for ligand-induced conformation changes and signaling signature appears at 361–365 (NPIIY). The Cytoplasmic segment spans residues 367 to 386 (MSNEDFKQAFHKLIRFKCAG). A lipid anchor (S-palmitoyl cysteine) is attached at Cys-384.

The protein belongs to the G-protein coupled receptor 1 family. Homodimer. Heterodimer with HTR1D. In terms of processing, phosphorylated. Desensitization of the receptor may be mediated by its phosphorylation. Palmitoylated. As to expression, predominantly expressed in striatum and Purkinje cells.

The protein localises to the cell membrane. Functionally, G-protein coupled receptor for 5-hydroxytryptamine (serotonin). Also functions as a receptor for ergot alkaloid derivatives, various anxiolytic and antidepressant drugs and other psychoactive substances, such as lysergic acid diethylamide (LSD). Ligand binding causes a conformation change that triggers signaling via guanine nucleotide-binding proteins (G proteins) and modulates the activity of downstream effectors, such as adenylate cyclase. HTR1B is coupled to G(i)/G(o) G alpha proteins and mediates inhibitory neurotransmission by inhibiting adenylate cyclase activity. Arrestin family members inhibit signaling via G proteins and mediate activation of alternative signaling pathways. Regulates the release of 5-hydroxytryptamine, dopamine and acetylcholine in the brain, and thereby affects neural activity, nociceptive processing, pain perception, mood and behavior. Besides, plays a role in vasoconstriction of cerebral arteries. The polypeptide is 5-hydroxytryptamine receptor 1B (Htr1b) (Mus musculus (Mouse)).